We begin with the raw amino-acid sequence, 459 residues long: Putrescine aminotransferase (459 aa).

Residues 150-151 (GT) and Q274 contribute to the pyridoxal 5'-phosphate site. K300 carries the N6-(pyridoxal phosphate)lysine modification. T332 is a binding site for pyridoxal 5'-phosphate.

It belongs to the class-III pyridoxal-phosphate-dependent aminotransferase family. Putrescine aminotransferase subfamily. It depends on pyridoxal 5'-phosphate as a cofactor.

The catalysed reaction is an alkane-alpha,omega-diamine + 2-oxoglutarate = an omega-aminoaldehyde + L-glutamate. It catalyses the reaction putrescine + 2-oxoglutarate = 1-pyrroline + L-glutamate + H2O. It carries out the reaction cadaverine + 2-oxoglutarate = 5-aminopentanal + L-glutamate. Its pathway is amine and polyamine degradation; putrescine degradation; 4-aminobutanal from putrescine (transaminase route): step 1/1. Its function is as follows. Catalyzes the aminotransferase reaction from putrescine to 2-oxoglutarate, leading to glutamate and 4-aminobutanal, which spontaneously cyclizes to form 1-pyrroline. This is the first step in one of two pathways for putrescine degradation, where putrescine is converted into 4-aminobutanoate (gamma-aminobutyrate or GABA) via 4-aminobutanal. Also functions as a cadaverine transaminase in a a L-lysine degradation pathway to succinate that proceeds via cadaverine, glutarate and L-2-hydroxyglutarate. This Shigella boydii serotype 4 (strain Sb227) protein is Putrescine aminotransferase.